We begin with the raw amino-acid sequence, 851 residues long: Pentatricopeptide repeat-containing protein At3g54980, mitochondrial (851 aa).

The N-terminal 26 residues, 1 to 26 (MRSLLVFRKIPSRIRLRNLRNNKPFC), are a transit peptide targeting the mitochondrion. 19 PPR repeats span residues 162-196 (NSRA…DVIP), 197-231 (FFPY…GVDG), 232-266 (DNVT…GAEP), 267-301 (DSLL…KLCV), 303-337 (SQET…GISM), 338-372 (NVVA…GPSP), 373-407 (NSVT…GLTP), 408-438 (SVFH…SFET), 442-476 (NVFV…GIGP), 477-511 (NVVS…GLKP), 512-546 (NNYT…NIEV), 547-577 (NGVV…MIEE), 583-617 (SCMS…GISP), 618-652 (NVIT…GVKL), 653-687 (DIPA…GLNP), 688-722 (SQPI…GLRC), 723-757 (DLGT…GLVP), 758-792 (DEII…NVTP), and 793-827 (NVLI…GILP).

Belongs to the PPR family. P subfamily.

The protein localises to the mitochondrion. This is Pentatricopeptide repeat-containing protein At3g54980, mitochondrial from Arabidopsis thaliana (Mouse-ear cress).